Here is a 251-residue protein sequence, read N- to C-terminus: Aspartate/glutamate leucyltransferase (251 aa).

The protein belongs to the R-transferase family. Bpt subfamily.

The protein resides in the cytoplasm. It catalyses the reaction N-terminal L-glutamyl-[protein] + L-leucyl-tRNA(Leu) = N-terminal L-leucyl-L-glutamyl-[protein] + tRNA(Leu) + H(+). The catalysed reaction is N-terminal L-aspartyl-[protein] + L-leucyl-tRNA(Leu) = N-terminal L-leucyl-L-aspartyl-[protein] + tRNA(Leu) + H(+). Functions in the N-end rule pathway of protein degradation where it conjugates Leu from its aminoacyl-tRNA to the N-termini of proteins containing an N-terminal aspartate or glutamate. The chain is Aspartate/glutamate leucyltransferase from Xanthomonas axonopodis pv. citri (strain 306).